The following is a 666-amino-acid chain: uncharacterized protein (666 aa).

This is an uncharacterized protein from Acanthamoeba polyphaga mimivirus (APMV).